We begin with the raw amino-acid sequence, 107 residues long: Phosphoribosyl-ATP pyrophosphatase (107 aa).

It belongs to the PRA-PH family.

Its subcellular location is the cytoplasm. It catalyses the reaction 1-(5-phospho-beta-D-ribosyl)-ATP + H2O = 1-(5-phospho-beta-D-ribosyl)-5'-AMP + diphosphate + H(+). It functions in the pathway amino-acid biosynthesis; L-histidine biosynthesis; L-histidine from 5-phospho-alpha-D-ribose 1-diphosphate: step 2/9. The polypeptide is Phosphoribosyl-ATP pyrophosphatase (Rhizobium johnstonii (strain DSM 114642 / LMG 32736 / 3841) (Rhizobium leguminosarum bv. viciae)).